A 119-amino-acid chain; its full sequence is Large ribosomal subunit protein bL19c (119 aa).

It belongs to the bacterial ribosomal protein bL19 family.

It localises to the plastid. The protein localises to the chloroplast. The chain is Large ribosomal subunit protein bL19c from Mesostigma viride (Green alga).